A 249-amino-acid chain; its full sequence is 2,3-bisphosphoglycerate-dependent phosphoglycerate mutase (249 aa).

Substrate is bound by residues 8–15 (RHGESIWN), 21–22 (TG), Arg-60, 87–90 (ERHY), Lys-98, 114–115 (RR), and 183–184 (GN). The active-site Tele-phosphohistidine intermediate is the His-9. The Proton donor/acceptor role is filled by Glu-87.

This sequence belongs to the phosphoglycerate mutase family. BPG-dependent PGAM subfamily.

It carries out the reaction (2R)-2-phosphoglycerate = (2R)-3-phosphoglycerate. It functions in the pathway carbohydrate degradation; glycolysis; pyruvate from D-glyceraldehyde 3-phosphate: step 3/5. Catalyzes the interconversion of 2-phosphoglycerate and 3-phosphoglycerate. The polypeptide is 2,3-bisphosphoglycerate-dependent phosphoglycerate mutase (Caldanaerobacter subterraneus subsp. tengcongensis (strain DSM 15242 / JCM 11007 / NBRC 100824 / MB4) (Thermoanaerobacter tengcongensis)).